We begin with the raw amino-acid sequence, 439 residues long: GTPase Der (439 aa).

2 consecutive EngA-type G domains span residues 4 to 168 and 177 to 352; these read PIVA…KDDE and INIA…DNYT. Residues 10–17, 57–61, 120–123, 183–190, 230–234, and 295–298 contribute to the GTP site; these read GRPNVGKS, DTGGI, NKID, GKPNVGKS, DTAGL, and NKWD. Residues 353–437 enclose the KH-like domain; it reads KRVKTGVLND…GIKLEFRERK (85 aa).

Belongs to the TRAFAC class TrmE-Era-EngA-EngB-Septin-like GTPase superfamily. EngA (Der) GTPase family. Associates with the 50S ribosomal subunit.

Functionally, GTPase that plays an essential role in the late steps of ribosome biogenesis. This Clostridium botulinum (strain Kyoto / Type A2) protein is GTPase Der.